Here is a 738-residue protein sequence, read N- to C-terminus: Wall-associated receptor kinase 4 (738 aa).

Positions 1 to 22 (MKVQRLFLVAIFCLSYMQLVKG) are cleaved as a signal peptide. The Extracellular portion of the chain corresponds to 23 to 335 (QTLPRCPEKC…PKGNPEYVEW (313 aa)). N-linked (GlcNAc...) asparagine glycans are attached at residues Asn34, Asn56, Asn109, Asn115, Asn132, Asn182, and Asn208. The region spanning 232–278 (RGETCGQVGEKKCGVNGICSNSASGIGYTCKCKGGFQGNPYLQNGCQ) is the EGF-like 1 domain. 6 cysteine pairs are disulfide-bonded: Cys236–Cys250, Cys244–Cys261, Cys263–Cys277, Cys283–Cys300, Cys294–Cys309, and Cys311–Cys324. The region spanning 279-325 (DINECTTANPIHKHNCSGDSTCENKLGHFRCNCRSRYELNTTTNTCK) is the EGF-like 2; calcium-binding domain. N-linked (GlcNAc...) asparagine glycosylation is present at Asn293. An N-linked (GlcNAc...) asparagine glycan is attached at Asn318. Residues 336–356 (TTIVLGTTIGFLVILLAISCI) traverse the membrane as a helical segment. Residues 357–738 (EHKMKNTKDT…VAILDIEAGR (382 aa)) are Cytoplasmic-facing. Position 399 is a phosphothreonine (Thr399). The region spanning 410–693 (YDENRILGQG…RVTKTKHKWS (284 aa)) is the Protein kinase domain. Residues 416-424 (LGQGGQGTV) and Lys438 contribute to the ATP site. Tyr483 is modified (phosphotyrosine). The active-site Proton acceptor is Asp535. Phosphothreonine occurs at positions 569 and 574. Tyr582 is subject to Phosphotyrosine.

This sequence belongs to the protein kinase superfamily. Ser/Thr protein kinase family. Strictly expressed in siliques.

It localises to the membrane. It carries out the reaction L-seryl-[protein] + ATP = O-phospho-L-seryl-[protein] + ADP + H(+). The catalysed reaction is L-threonyl-[protein] + ATP = O-phospho-L-threonyl-[protein] + ADP + H(+). Functionally, serine/threonine-protein kinase that may function as a signaling receptor of extracellular matrix component. Binding to pectin may have significance in the control of cell expansion, morphogenesis and development. This chain is Wall-associated receptor kinase 4 (WAK4), found in Arabidopsis thaliana (Mouse-ear cress).